The following is an 86-amino-acid chain: Weak neurotoxin WNTX34 (86 aa).

A signal peptide spans 1 to 21; sequence MKTLLLTLVVVTIVCLDLGYS. 5 cysteine pairs are disulfide-bonded: cysteine 24-cysteine 45, cysteine 27-cysteine 32, cysteine 38-cysteine 63, cysteine 67-cysteine 78, and cysteine 79-cysteine 84.

It belongs to the three-finger toxin family. Ancestral subfamily. Orphan group II sub-subfamily. Expressed by the venom gland.

It is found in the secreted. Its function is as follows. Binds with low affinity to muscular (alpha-1-beta-1-delta-epsilon/CHRNA1-CHRNB1-CHRND-CHRNE) and very low affinity to neuronal (alpha-7/CHRNA7) nicotinic acetylcholine receptor (nAChR). The protein is Weak neurotoxin WNTX34 of Ophiophagus hannah (King cobra).